We begin with the raw amino-acid sequence, 209 residues long: Small ribosomal subunit protein uS4 (209 aa).

Basic residues predominate over residues 1 to 13; it reads MSTKSRTRSKTRL. Disordered stretches follow at residues 1-20 and 28-49; these read MSTKSRTRSKTRLSRALGIP and YLEKRPYAPGEHGRSKRKQDSD. An S4 RNA-binding domain is found at 95-176; the sequence is QRLDALVVRS…PKLPSYLEVE (82 aa).

This sequence belongs to the universal ribosomal protein uS4 family. In terms of assembly, part of the 30S ribosomal subunit. Contacts protein S5. The interaction surface between S4 and S5 is involved in control of translational fidelity.

Functionally, one of the primary rRNA binding proteins, it binds directly to 16S rRNA where it nucleates assembly of the body of the 30S subunit. In terms of biological role, with S5 and S12 plays an important role in translational accuracy. The polypeptide is Small ribosomal subunit protein uS4 (Clavibacter michiganensis subsp. michiganensis (strain NCPPB 382)).